The following is a 261-amino-acid chain: Hemin import ATP-binding protein HmuV (261 aa).

The 241-residue stretch at 3 to 243 (LQAQDLSVDR…ANLRRVYGVE (241 aa)) folds into the ABC transporter domain. ATP is bound at residue 35–42 (GANGAGKS).

It belongs to the ABC transporter superfamily. Heme (hemin) importer (TC 3.A.1.14.5) family. The complex is composed of two ATP-binding proteins (HmuV), two transmembrane proteins (HmuU) and a solute-binding protein (HmuT).

It localises to the cell inner membrane. In terms of biological role, part of the ABC transporter complex HmuTUV involved in hemin import. Responsible for energy coupling to the transport system. The protein is Hemin import ATP-binding protein HmuV of Bordetella avium (strain 197N).